Reading from the N-terminus, the 590-residue chain is Urease subunit alpha (590 aa).

Residues 134–590 enclose the Urease domain; that stretch reads GGIDSHIHFI…LPLAQRYFLF (457 aa). Ni(2+) contacts are provided by His-139, His-141, and Lys-222. Lys-222 bears the N6-carboxylysine mark. His-224 is a binding site for substrate. 2 residues coordinate Ni(2+): His-251 and His-277. Residue His-325 is the Proton donor of the active site. Residue Asp-365 participates in Ni(2+) binding. The tract at residues 388–416 is disordered; the sequence is QQRGWLSPPAAGQGAGLSSAAGQGVDHDT. The span at 393–411 shows a compositional bias: low complexity; that stretch reads LSPPAAGQGAGLSSAAGQG.

The protein belongs to the metallo-dependent hydrolases superfamily. Urease alpha subunit family. Heterotrimer of UreA (gamma), UreB (beta) and UreC (alpha) subunits. Three heterotrimers associate to form the active enzyme. Ni cation serves as cofactor. Post-translationally, carboxylation allows a single lysine to coordinate two nickel ions.

It is found in the cytoplasm. It carries out the reaction urea + 2 H2O + H(+) = hydrogencarbonate + 2 NH4(+). The protein operates within nitrogen metabolism; urea degradation; CO(2) and NH(3) from urea (urease route): step 1/1. This chain is Urease subunit alpha, found in Verminephrobacter eiseniae (strain EF01-2).